Consider the following 243-residue polypeptide: tRNA (guanine-N(1)-)-methyltransferase (243 aa).

Residues G123 and L143 to M148 contribute to the S-adenosyl-L-methionine site.

The protein belongs to the RNA methyltransferase TrmD family. As to quaternary structure, homodimer.

It is found in the cytoplasm. It catalyses the reaction guanosine(37) in tRNA + S-adenosyl-L-methionine = N(1)-methylguanosine(37) in tRNA + S-adenosyl-L-homocysteine + H(+). In terms of biological role, specifically methylates guanosine-37 in various tRNAs. This chain is tRNA (guanine-N(1)-)-methyltransferase, found in Ruegeria pomeroyi (strain ATCC 700808 / DSM 15171 / DSS-3) (Silicibacter pomeroyi).